The primary structure comprises 397 residues: Ubiquitin-like modifier-activating enzyme 5 (397 aa).

ATP-binding residues include glycine 77, aspartate 98, lysine 121, asparagine 144, and asparagine 178. Zn(2+)-binding residues include cysteine 220 and cysteine 223. The Glycyl thioester intermediate role is filled by cysteine 244. Positions 297 and 302 each coordinate Zn(2+).

It belongs to the ubiquitin-activating E1 family. UBA5 subfamily.

In terms of biological role, E1-like enzyme which activates UFM1. The polypeptide is Ubiquitin-like modifier-activating enzyme 5 (Culex quinquefasciatus (Southern house mosquito)).